We begin with the raw amino-acid sequence, 64 residues long: MRPRSRAGDKFMSQGQELCHEYFQLTAPCEKQPCIDMCSSKYKTGKGVCGPAVHQCFCTFSCTV.

Intrachain disulfides connect cysteine 19–cysteine 62, cysteine 29–cysteine 49, cysteine 34–cysteine 56, and cysteine 38–cysteine 58.

Belongs to the DEFL family.

This Arabidopsis thaliana (Mouse-ear cress) protein is Defensin-like protein 123.